Here is a 383-residue protein sequence, read N- to C-terminus: N-acetyldiaminopimelate deacetylase (383 aa).

D75 is an active-site residue. Residue E134 is the Proton acceptor of the active site.

It belongs to the peptidase M20A family. N-acetyldiaminopimelate deacetylase subfamily.

The catalysed reaction is N-acetyl-(2S,6S)-2,6-diaminopimelate + H2O = (2S,6S)-2,6-diaminopimelate + acetate. The protein operates within amino-acid biosynthesis; L-lysine biosynthesis via DAP pathway; LL-2,6-diaminopimelate from (S)-tetrahydrodipicolinate (acetylase route): step 3/3. Its function is as follows. Catalyzes the conversion of N-acetyl-diaminopimelate to diaminopimelate and acetate. The sequence is that of N-acetyldiaminopimelate deacetylase from Lactobacillus acidophilus (strain ATCC 700396 / NCK56 / N2 / NCFM).